The primary structure comprises 310 residues: Isoflavone reductase homolog A622 (310 aa).

NADP(+) contacts are provided by residues 13-19 (GGTGYIG), Arg-38, and Lys-47. Lys-135 serves as the catalytic Proton acceptor. Residue Arg-139 participates in NADP(+) binding.

It belongs to the NmrA-type oxidoreductase family. Isoflavone reductase subfamily. Monomer.

Its subcellular location is the cytoplasm. It participates in alkaloid biosynthesis; nicotine biosynthesis. In terms of biological role, NADPH-binding protein. Involved in the biosynthesis of pyridine alkaloid natural products, leading mainly to the production of anabasine, anatabine, nicotine and nornicotine, effective deterrents against herbivores with antiparasitic and pesticide properties (neurotoxins); nornicotine serves as the precursor in the synthesis of the carcinogen compound N'-nitrosonornicotine (NNN). Reductase involved in a late step of tobacco alkaloid biosynthesis. Triggers either the formation of a nicotinic acid-derived precursor or the final condensation reaction of tobacco alkaloids. In Nicotiana glauca (Glaucous tobacco), this protein is Isoflavone reductase homolog A622.